The primary structure comprises 66 residues: DNA-directed RNA polymerase subunit omega (66 aa).

Belongs to the RNA polymerase subunit omega family. In terms of assembly, the RNAP catalytic core consists of 2 alpha, 1 beta, 1 beta' and 1 omega subunit. When a sigma factor is associated with the core the holoenzyme is formed, which can initiate transcription.

It carries out the reaction RNA(n) + a ribonucleoside 5'-triphosphate = RNA(n+1) + diphosphate. In terms of biological role, promotes RNA polymerase assembly. Latches the N- and C-terminal regions of the beta' subunit thereby facilitating its interaction with the beta and alpha subunits. The protein is DNA-directed RNA polymerase subunit omega of Clostridium botulinum (strain Eklund 17B / Type B).